A 191-amino-acid chain; its full sequence is Crossover junction endodeoxyribonuclease RuvC (191 aa).

Residues Asp-7, Glu-67, and Asp-141 contribute to the active site. 3 residues coordinate Mg(2+): Asp-7, Glu-67, and Asp-141.

The protein belongs to the RuvC family. Homodimer which binds Holliday junction (HJ) DNA. The HJ becomes 2-fold symmetrical on binding to RuvC with unstacked arms; it has a different conformation from HJ DNA in complex with RuvA. In the full resolvosome a probable DNA-RuvA(4)-RuvB(12)-RuvC(2) complex forms which resolves the HJ. Mg(2+) serves as cofactor.

It localises to the cytoplasm. It carries out the reaction Endonucleolytic cleavage at a junction such as a reciprocal single-stranded crossover between two homologous DNA duplexes (Holliday junction).. In terms of biological role, the RuvA-RuvB-RuvC complex processes Holliday junction (HJ) DNA during genetic recombination and DNA repair. Endonuclease that resolves HJ intermediates. Cleaves cruciform DNA by making single-stranded nicks across the HJ at symmetrical positions within the homologous arms, yielding a 5'-phosphate and a 3'-hydroxyl group; requires a central core of homology in the junction. The consensus cleavage sequence is 5'-(A/T)TT(C/G)-3'. Cleavage occurs on the 3'-side of the TT dinucleotide at the point of strand exchange. HJ branch migration catalyzed by RuvA-RuvB allows RuvC to scan DNA until it finds its consensus sequence, where it cleaves and resolves the cruciform DNA. This Myxococcus xanthus (strain DK1622) protein is Crossover junction endodeoxyribonuclease RuvC.